Reading from the N-terminus, the 879-residue chain is Translation initiation factor IF-2 (879 aa).

Positions 48 to 261 (EAFPPPPEPA…RPHKSKKQRR (214 aa)) are disordered. Residues 82–111 (PAADAAAPPAVTTPPSAAPAGATTSAPSDA) show a composition bias toward low complexity. Pro residues-rich tracts occupy residues 119 to 142 (PPRP…PSGP), 152 to 163 (SPMPRPMPPRPV), and 173 to 197 (PGIP…PPRP). Low complexity predominate over residues 198-213 (AAGRAAPGRGAPIRLP). Positions 228–246 (PGVGGRGRGAPGGAFGRGP) are enriched in gly residues. A compositionally biased stretch (basic residues) spans 251-260 (SRPHKSKKQR). Residues 372–543 (PRPPVVTVMG…AILLTADAAL (172 aa)) form the tr-type G domain. Positions 381–388 (GHVDHGKT) are G1. GTP is bound at residue 381-388 (GHVDHGKT). The interval 406 to 410 (GITQH) is G2. Residues 431 to 434 (DTPG) form a G3 region. GTP is bound by residues 431–435 (DTPGH) and 485–488 (NKID). A G4 region spans residues 485–488 (NKID). The tract at residues 521 to 523 (SAL) is G5.

The protein belongs to the TRAFAC class translation factor GTPase superfamily. Classic translation factor GTPase family. IF-2 subfamily.

It is found in the cytoplasm. In terms of biological role, one of the essential components for the initiation of protein synthesis. Protects formylmethionyl-tRNA from spontaneous hydrolysis and promotes its binding to the 30S ribosomal subunits. Also involved in the hydrolysis of GTP during the formation of the 70S ribosomal complex. The polypeptide is Translation initiation factor IF-2 (Acidothermus cellulolyticus (strain ATCC 43068 / DSM 8971 / 11B)).